A 465-amino-acid polypeptide reads, in one-letter code: UDP-N-acetylmuramate--L-alanine ligase (465 aa).

ATP is bound at residue 112-118; it reads GTHGKTT.

The protein belongs to the MurCDEF family.

The protein localises to the cytoplasm. The catalysed reaction is UDP-N-acetyl-alpha-D-muramate + L-alanine + ATP = UDP-N-acetyl-alpha-D-muramoyl-L-alanine + ADP + phosphate + H(+). The protein operates within cell wall biogenesis; peptidoglycan biosynthesis. Cell wall formation. In Burkholderia orbicola (strain MC0-3), this protein is UDP-N-acetylmuramate--L-alanine ligase.